Reading from the N-terminus, the 349-residue chain is S-adenosylmethionine:tRNA ribosyltransferase-isomerase (349 aa).

The protein belongs to the QueA family. As to quaternary structure, monomer.

It is found in the cytoplasm. It catalyses the reaction 7-aminomethyl-7-carbaguanosine(34) in tRNA + S-adenosyl-L-methionine = epoxyqueuosine(34) in tRNA + adenine + L-methionine + 2 H(+). Its pathway is tRNA modification; tRNA-queuosine biosynthesis. Transfers and isomerizes the ribose moiety from AdoMet to the 7-aminomethyl group of 7-deazaguanine (preQ1-tRNA) to give epoxyqueuosine (oQ-tRNA). The protein is S-adenosylmethionine:tRNA ribosyltransferase-isomerase of Ruegeria pomeroyi (strain ATCC 700808 / DSM 15171 / DSS-3) (Silicibacter pomeroyi).